A 237-amino-acid chain; its full sequence is Chalcone--flavanone isomerase 1 (237 aa).

Threonine 48, asparagine 113, and serine 190 together coordinate substrate.

The protein belongs to the chalcone isomerase family.

It carries out the reaction a chalcone = a flavanone.. It functions in the pathway secondary metabolite biosynthesis; flavonoid biosynthesis. Its function is as follows. Catalyzes the intramolecular cyclization of bicyclic chalcones into tricyclic (S)-flavanones. Responsible for the isomerization of 4,2',4',6'-tetrahydroxychalcone (also termed chalcone) into naringenin. The protein is Chalcone--flavanone isomerase 1 (CHI1) of Fragaria ananassa (Strawberry).